Here is a 58-residue protein sequence, read N- to C-terminus: uncharacterized protein (58 aa).

This is an uncharacterized protein from Yersinia enterocolitica.